Reading from the N-terminus, the 424-residue chain is Inhibin beta A chain (424 aa).

The signal sequence occupies residues 1 to 20 (MPLLWLRGFLLASCWIIVRS). A propeptide spanning residues 21–308 (SPTPGSEGHG…EDHPHRRRRR (288 aa)) is cleaved from the precursor. Residue Asn-165 is glycosylated (N-linked (GlcNAc...) asparagine). Over residues 264–275 (EVDGDGKKKDGS) the composition is skewed to basic and acidic residues. A disordered region spans residues 264–306 (EVDGDGKKKDGSDGGLEEEKEQSHRPFLMLQARQSEDHPHRRR). 4 cysteine pairs are disulfide-bonded: Cys-312–Cys-320, Cys-319–Cys-389, Cys-348–Cys-421, and Cys-352–Cys-423.

The protein belongs to the TGF-beta family. In terms of assembly, dimeric, linked by one or more disulfide bonds. Inhibin A is a dimer of alpha/INHA and beta-A/INHBA. Activin A is a homodimer of beta-A/INHBA. Activin AB is a dimer of beta-A/INHBA and beta-B/INHBB. Interacts with FST and FSTL3; these interactions prevent activin A interaction to its type II receptor. Activin A interacts with ACVR2A. Activin A interacts with BMPR2. Inhibin A interacts with ACVR1; this interaction creates a non-signaling complex (NSC) that inhibits ACVR1-mediated BMP signaling. Inhibin A interacts with ACVR2A.

The protein localises to the secreted. Functionally, inhibins/activins are involved in regulating a number of diverse functions such as hypothalamic and pituitary hormone secretion, gonadal hormone secretion, germ cell development and maturation, erythroid differentiation, insulin secretion, nerve cell survival, embryonic axial development or bone growth, depending on their subunit composition. Activin A is a homodimer of INHBA that plays a role in several essential biological processes including embryonic development, stem cell maintenance and differentiation, haematopoiesis, cell proliferation and tissue fibrosis. Signals through type I (such as ACVR1B or ACVR1C) and type II receptors (such as ACVR2A, ACVR2B or BMPR2) which, upon ligand binding, phosphorylate SMAD2 and SMAD3 intracellular signaling mediators that form a complex with SMAD4, translocate to the nucleus and modulate gene expression. Can also activate alternative non-canonical intracellular signaling pathways including the p38 MAPK, extracellular signal-regulated kinases 1/2 (ERK1/2) and c-Jun N-terminal kinases (JNKs) to modulate cell migration and differentiation. Alternatively, promotes osteoblastic differentiation via ACVRL1-SMAD1/5/9 pathway. In addition, can engage the type I receptor ACVR1 to form an ACVR1-activin A-type II receptor non-signaling complex (NSC) that renders receptors unavailable for engagement with BMPs, hence resulting in an apparent inhibition of ACVR1-mediated BMP signaling. In terms of biological role, inhibin A is a dimer of alpha/INHA and beta-A/INHBA that functions as a feedback regulator in the hypothalamic-pituitary-gonadal (HPG) axis. Inhibits the secretion of FSH from the anterior pituitary gland by acting on pituitary gonadotrope cells. Antagonizes activin A by binding to the proteoglycan, betaglycan, and forming a stable complex with and, thereby, sequestering type II activin receptors while excluding type I receptor. The sequence is that of Inhibin beta A chain (Inhba) from Rattus norvegicus (Rat).